A 236-amino-acid polypeptide reads, in one-letter code: Venom metalloproteinase antarease-like TfasMP_A (236 aa).

Residues 4 to 232 (IVVEYYIVTD…KPAASCIFEQ (229 aa)) form the Peptidase M12B domain. H161 serves as a coordination point for Zn(2+). Residue E162 is part of the active site. Zn(2+) is bound by residues H165 and H171.

The protein belongs to the venom metalloproteinase (M12B) family. Zn(2+) is required as a cofactor. Contains several disulfide bonds. As to expression, expressed by the venom gland.

It is found in the secreted. With respect to regulation, inhibited by EDTA. In terms of biological role, acts as a metalloprotease. Penetrates intact tissue and specifically cleaves the vesicle-associated membrane protein 2 (VAMP2) (part of the SNARE complex) involved in pancreatic secretion, thus disrupting the normal vesicular traffic. This is Venom metalloproteinase antarease-like TfasMP_A from Tityus fasciolatus (Central Brazilian scorpion).